The chain runs to 338 residues: Glyceraldehyde-3-phosphate dehydrogenase 2 (338 aa).

NAD(+) contacts are provided by residues 12-13 (RI), Asp-34, and Arg-79. D-glyceraldehyde 3-phosphate-binding positions include 150-152 (SCT), Thr-181, 210-211 (TG), and Arg-233. The active-site Nucleophile is Cys-151. Asn-315 is a binding site for NAD(+).

The protein belongs to the glyceraldehyde-3-phosphate dehydrogenase family. Homotetramer.

Its subcellular location is the cytoplasm. It catalyses the reaction D-glyceraldehyde 3-phosphate + phosphate + NAD(+) = (2R)-3-phospho-glyceroyl phosphate + NADH + H(+). The protein operates within carbohydrate degradation; glycolysis; pyruvate from D-glyceraldehyde 3-phosphate: step 1/5. The protein is Glyceraldehyde-3-phosphate dehydrogenase 2 (GPD2) of Mucor circinelloides f. lusitanicus (Mucor racemosus var. lusitanicus).